A 367-amino-acid chain; its full sequence is Type II methyltransferase M.CviJI (367 aa).

In terms of domain architecture, SAM-dependent MTase C5-type spans 3–367 (FRTLELFAGI…EYLGYLVQYD (365 aa)). C73 is an active-site residue.

The protein belongs to the class I-like SAM-binding methyltransferase superfamily. C5-methyltransferase family.

It carries out the reaction a 2'-deoxycytidine in DNA + S-adenosyl-L-methionine = a 5-methyl-2'-deoxycytidine in DNA + S-adenosyl-L-homocysteine + H(+). In terms of biological role, a methylase that recognizes the double-stranded sequence 5'-RGCY-3', methylates C-3 on both strands, and protects the DNA from cleavage by the CviJI endonuclease. This Chlorella (PBCV-IL3A) protein is Type II methyltransferase M.CviJI.